The sequence spans 243 residues: Probable transcriptional regulatory protein BRE_29 (243 aa).

It belongs to the TACO1 family.

The protein localises to the cytoplasm. The chain is Probable transcriptional regulatory protein BRE_29 from Borrelia recurrentis (strain A1).